The sequence spans 298 residues: Protein transport protein SEC13-1 (298 aa).

WD repeat units lie at residues 7-46 (AHNDLIHDAVLDYYGKKLATCSSDKTIKIFEVEGESHKLV), 51-92 (GHEG…WSQI), 97-138 (VHTA…TATP), 143-196 (AHAI…QSYL), 203-245 (GHSD…GPWV), and 253-292 (EFPDVLWRASWSLSGNILAISGGDNKVTLWKENLNGKWES).

Belongs to the WD repeat SEC13 family. In terms of assembly, the COPII coat is composed of at least 5 proteins: the SEC23/24 complex, the SEC13/31 complex, and the protein SAR1. Component of the nuclear pore complex (NPC). NPC constitutes the exclusive means of nucleocytoplasmic transport. NPCs allow the passive diffusion of ions and small molecules and the active, nuclear transport receptor-mediated bidirectional transport of macromolecules such as proteins, RNAs, ribonucleoparticles (RNPs), and ribosomal subunits across the nuclear envelope. Due to its 8-fold rotational symmetry, all subunits are present with 8 copies or multiples thereof.

The protein resides in the cytoplasmic vesicle. It localises to the COPII-coated vesicle membrane. Its subcellular location is the endoplasmic reticulum membrane. It is found in the nucleus. The protein localises to the nuclear pore complex. Component of the coat protein complex II (COPII) which promotes the formation of transport vesicles from the endoplasmic reticulum (ER). The coat has two main functions, the physical deformation of the endoplasmic reticulum membrane into vesicles and the selection of cargo molecules. It also functions as a component of the nuclear pore complex (NPC). NPC components, collectively referred to as nucleoporins (NUPs), can play the role of both NPC structural components and of docking or interaction partners for transiently associated nuclear transport factors. SEC13 is required for efficient mRNA export from the nucleus to the cytoplasm and for correct nuclear pore biogenesis and distribution. The chain is Protein transport protein SEC13-1 (SEC131) from Candida glabrata (strain ATCC 2001 / BCRC 20586 / JCM 3761 / NBRC 0622 / NRRL Y-65 / CBS 138) (Yeast).